The chain runs to 453 residues: Bifunctional protein GlmU (453 aa).

The tract at residues 1–228 (MPHWAAVIMA…VHEALGINSR (228 aa)) is pyrophosphorylase. Residues Lys-23, Gln-73, 78–79 (GT), 100–102 (SGD), Gly-139, Glu-153, Asn-168, and Asn-226 contribute to the UDP-N-acetyl-alpha-D-glucosamine site. Residue Asp-102 coordinates Mg(2+). Asn-226 provides a ligand contact to Mg(2+). Residues 229–249 (AQLAAAEDVARQRILSYWMEE) are linker. Residues 250–453 (GVTIIDPRST…IENWVRNKKK (204 aa)) are N-acetyltransferase. Residues Arg-331 and Lys-349 each coordinate UDP-N-acetyl-alpha-D-glucosamine. The Proton acceptor role is filled by His-361. UDP-N-acetyl-alpha-D-glucosamine-binding residues include Tyr-364 and Asn-375. Residues Ala-378, 384–385 (NY), Ser-403, Ala-421, and Arg-438 contribute to the acetyl-CoA site.

In the N-terminal section; belongs to the N-acetylglucosamine-1-phosphate uridyltransferase family. The protein in the C-terminal section; belongs to the transferase hexapeptide repeat family. In terms of assembly, homotrimer. Mg(2+) is required as a cofactor.

It is found in the cytoplasm. It carries out the reaction alpha-D-glucosamine 1-phosphate + acetyl-CoA = N-acetyl-alpha-D-glucosamine 1-phosphate + CoA + H(+). The catalysed reaction is N-acetyl-alpha-D-glucosamine 1-phosphate + UTP + H(+) = UDP-N-acetyl-alpha-D-glucosamine + diphosphate. The protein operates within nucleotide-sugar biosynthesis; UDP-N-acetyl-alpha-D-glucosamine biosynthesis; N-acetyl-alpha-D-glucosamine 1-phosphate from alpha-D-glucosamine 6-phosphate (route II): step 2/2. It participates in nucleotide-sugar biosynthesis; UDP-N-acetyl-alpha-D-glucosamine biosynthesis; UDP-N-acetyl-alpha-D-glucosamine from N-acetyl-alpha-D-glucosamine 1-phosphate: step 1/1. It functions in the pathway bacterial outer membrane biogenesis; LPS lipid A biosynthesis. Its function is as follows. Catalyzes the last two sequential reactions in the de novo biosynthetic pathway for UDP-N-acetylglucosamine (UDP-GlcNAc). The C-terminal domain catalyzes the transfer of acetyl group from acetyl coenzyme A to glucosamine-1-phosphate (GlcN-1-P) to produce N-acetylglucosamine-1-phosphate (GlcNAc-1-P), which is converted into UDP-GlcNAc by the transfer of uridine 5-monophosphate (from uridine 5-triphosphate), a reaction catalyzed by the N-terminal domain. The polypeptide is Bifunctional protein GlmU (Desulfitobacterium hafniense (strain DSM 10664 / DCB-2)).